Here is an 81-residue protein sequence, read N- to C-terminus: Large ribosomal subunit protein bL31B (81 aa).

This sequence belongs to the bacterial ribosomal protein bL31 family. Type B subfamily. In terms of assembly, part of the 50S ribosomal subunit.

This is Large ribosomal subunit protein bL31B from Lactococcus lactis subsp. cremoris (strain MG1363).